A 241-amino-acid chain; its full sequence is Transcription factor HEC1 (241 aa).

A bHLH domain is found at 128–177 (ISKDPQSVAARHRRERISERIRILQRLVPGGTKMDTASMLDEAIHYVKFL).

As to quaternary structure, homodimer. Interacts with SPT. Interacts with BZIP30. Flowers, especially in gynoecium.

The protein localises to the nucleus. Required for the female reproductive tract development and fertility. The protein is Transcription factor HEC1 (HEC1) of Arabidopsis thaliana (Mouse-ear cress).